A 1042-amino-acid chain; its full sequence is Exosome RNA helicase MTR4 (1042 aa).

The residue at position 2 (A2) is an N-acetylalanine. A disordered region spans residues 16–74 (DSTTAAGTKKDKEKDKGKWKGPPGSADKAGKRFDGKLQSESTNNGKNKRDVDFEGTDEP). Positions 23 to 33 (TKKDKEKDKGK) are enriched in basic and acidic residues. A Glycyl lysine isopeptide (Lys-Gly) (interchain with G-Cter in SUMO2) cross-link involves residue K24. S40 bears the Phosphoserine mark. Basic and acidic residues predominate over residues 43-52 (KAGKRFDGKL). Residues K51 and K78 each carry the N6-acetyllysine modification. Residues I139, 161–168 (AHTSAGKT), S164, G166, K167, and T168 each bind ATP. A Helicase ATP-binding domain is found at 148-304 (IQCVDNNQSV…WICHLHKQPC (157 aa)). The short motif at 252–255 (DEIH) is the DEIH box element. K358 participates in a covalent cross-link: Glycyl lysine isopeptide (Lys-Gly) (interchain with G-Cter in SUMO2). Residues 405–577 (QMTKLDFNTD…NMVLNLLRVE (173 aa)) form the Helicase C-terminal domain. Glycyl lysine isopeptide (Lys-Gly) (interchain with G-Cter in SUMO2) cross-links involve residues K684 and K723.

It belongs to the helicase family. SKI2 subfamily. In terms of assembly, component of a TRAMP-like complex, an ATP-dependent exosome regulatory complex consisting of a helicase (MTREX), an oligadenylate polymerase (TENT4B or TENT4A), and a substrate specific RNA-binding factor (ZCCHC7 or ZCCHC8). Several TRAMP-like complexes exist with specific compositions and are associated with nuclear, or nucleolar RNA exosomes. Identified in the spliceosome C complex. Component of the poly(A) tail exosome targeting (PAXT) complex made of PABPN1, ZFC3H1 and MTREX that directs a subset of long and polyadenylated poly(A) RNAs for exosomal degradation. Component of the nuclear exosome targeting (NEXT) complex composed of MTREX, ZCCHC8, and RBM7 that directs a subset of non-coding short-lived RNAs for exosomal degradation. Interacts with ZCCHC8; this interaction bridges the interaction between RBM7 and MTREX. Binds to ZFC3H1 and RBM7 in a RNase-insensitive manner. Interacts with EXOSC10; the interaction mediates the association of MTREX with nuclear RNA exosomes. Interacts with isoform 1 of NVL in an ATP-dependent manner; the interaction is required to associate NVL with nuclear RNA exosome. Interacts with WDR74; the interaction dissociation in a late stage of rRNA synthesis is required for appropriate maturation of pre-60S particles and depends on the ATPase activity of NVL. Interacts with MPHOSPH6. Interacts with the RNA cap-binding complex proteins NCBP1 and SRRT. Interacts with NRDE2; the interaction is direct and negatively regulates MTREX function in exosomal degradation by changing its conformation precluding interaction with ZFC3H1, the RNA cap-binding complex proteins NCBP1 and SRRT, and association with the exosome. Associates with the RNA exosome complex.

It is found in the nucleus. The protein localises to the nucleoplasm. The protein resides in the nucleolus. Its subcellular location is the nucleus speckle. It carries out the reaction ATP + H2O = ADP + phosphate + H(+). Activated when MTREX is incorporated into NEXT complex an the nuclear RNA exosome complex. Catalyzes the ATP-dependent unwinding of RNA duplexes with a single-stranded 3' RNA extension. Central subunit of many protein complexes, namely TRAMP-like, nuclear exosome targeting (NEXT) and poly(A) tail exosome targeting (PAXT). NEXT functions as an RNA exosome cofactor that directs a subset of non-coding short-lived RNAs for exosomal degradation. NEXT is involved in surveillance and turnover of aberrant transcripts and non-coding RNAs. PAXT directs a subset of long and polyadenylated poly(A) RNAs for exosomal degradation. The RNA exosome is fundamental for the degradation of RNA in eukaryotic nuclei. Substrate targeting is facilitated by its cofactor ZCCHC8, which links to RNA-binding protein adapters. Associated with the RNA exosome complex and involved in the 3'-processing of the 7S pre-RNA to the mature 5.8S rRNA. May be involved in pre-mRNA splicing. In the context of NEXT complex can also in vitro unwind DNA:RNA heteroduplexes with a 3' poly (A) RNA tracking strand. Can promote unwinding and degradation of structured RNA substrates when associated with the nuclear exosome and its cofactors. Can displace a DNA strand while translocating on RNA to ultimately degrade the RNA within a DNA/RNA heteroduplex. Plays a role in DNA damage response. This is Exosome RNA helicase MTR4 from Homo sapiens (Human).